We begin with the raw amino-acid sequence, 101 residues long: Putative membrane protein insertion efficiency factor (101 aa).

It belongs to the UPF0161 family.

It localises to the cell inner membrane. Its function is as follows. Could be involved in insertion of integral membrane proteins into the membrane. This chain is Putative membrane protein insertion efficiency factor, found in Methylobacterium sp. (strain 4-46).